Here is a 338-residue protein sequence, read N- to C-terminus: Phenylalanine--tRNA ligase alpha subunit (338 aa).

Glutamate 253 lines the Mg(2+) pocket.

Belongs to the class-II aminoacyl-tRNA synthetase family. Phe-tRNA synthetase alpha subunit type 1 subfamily. As to quaternary structure, tetramer of two alpha and two beta subunits. Requires Mg(2+) as cofactor.

The protein localises to the cytoplasm. The enzyme catalyses tRNA(Phe) + L-phenylalanine + ATP = L-phenylalanyl-tRNA(Phe) + AMP + diphosphate + H(+). This Geotalea uraniireducens (strain Rf4) (Geobacter uraniireducens) protein is Phenylalanine--tRNA ligase alpha subunit.